Reading from the N-terminus, the 122-residue chain is Large ribosomal subunit protein uL14 (122 aa).

Belongs to the universal ribosomal protein uL14 family. In terms of assembly, part of the 50S ribosomal subunit. Forms a cluster with proteins L3 and L19. In the 70S ribosome, L14 and L19 interact and together make contacts with the 16S rRNA in bridges B5 and B8.

Its function is as follows. Binds to 23S rRNA. Forms part of two intersubunit bridges in the 70S ribosome. In Mycoplasmopsis pulmonis (strain UAB CTIP) (Mycoplasma pulmonis), this protein is Large ribosomal subunit protein uL14.